The chain runs to 298 residues: UDP-3-O-acyl-N-acetylglucosamine deacetylase (298 aa).

Zn(2+)-binding residues include His-75, His-232, and Asp-236. The active-site Proton donor is His-259.

The protein belongs to the LpxC family. Zn(2+) serves as cofactor.

It catalyses the reaction a UDP-3-O-[(3R)-3-hydroxyacyl]-N-acetyl-alpha-D-glucosamine + H2O = a UDP-3-O-[(3R)-3-hydroxyacyl]-alpha-D-glucosamine + acetate. It participates in glycolipid biosynthesis; lipid IV(A) biosynthesis; lipid IV(A) from (3R)-3-hydroxytetradecanoyl-[acyl-carrier-protein] and UDP-N-acetyl-alpha-D-glucosamine: step 2/6. Functionally, catalyzes the hydrolysis of UDP-3-O-myristoyl-N-acetylglucosamine to form UDP-3-O-myristoylglucosamine and acetate, the committed step in lipid A biosynthesis. In Nitratiruptor sp. (strain SB155-2), this protein is UDP-3-O-acyl-N-acetylglucosamine deacetylase.